A 488-amino-acid chain; its full sequence is MELYSLTIHELRELLKKREVSALEVTKSYLERIKEVEPKIDALITITEDFALQRAKEADEKIKNGEDTALTGIPVIIKDNISTEGIKTTCSSKMLENYIPPYNATVVEKLLEEGVIILGKSNLDEFAMGSSTENSAFKTTKNPWDLSRVPGGSSGGSAAAIAADEAAFALGSDTGGSIRQPASLCGVVGMKPTYGLVSRYGLVAFASSLDQIGPFTKDVTDCAIVLNTIIGHDPKDSTSLKIDKPDYTSYLKEDIKGLRIGVAKEFFGEGIEEGVKETVQESIKVLQDLGAEIIDISIPYVEYALPAYYIIASAEASSNLARYDGIRYGHIAGKYEDLIDMYMVTRSEGFGKEVKRRIMLGTYALSSGYYDAYYKKALKVRTLIKNDFEKAFEKCDVIIGPTSPTVAFKIGERANDPLAMYLADIYTVSVNIAGLPGISIPCGLSDGLPVGLQIIGRHFDEGKILNVAYAFEQANKFNAKPQAIGGAR.

Residues Lys78 and Ser153 each act as charge relay system in the active site. Ser177 serves as the catalytic Acyl-ester intermediate.

The protein belongs to the amidase family. GatA subfamily. Heterotrimer of A, B and C subunits.

It catalyses the reaction L-glutamyl-tRNA(Gln) + L-glutamine + ATP + H2O = L-glutaminyl-tRNA(Gln) + L-glutamate + ADP + phosphate + H(+). Its function is as follows. Allows the formation of correctly charged Gln-tRNA(Gln) through the transamidation of misacylated Glu-tRNA(Gln) in organisms which lack glutaminyl-tRNA synthetase. The reaction takes place in the presence of glutamine and ATP through an activated gamma-phospho-Glu-tRNA(Gln). The polypeptide is Glutamyl-tRNA(Gln) amidotransferase subunit A (Thermoanaerobacter pseudethanolicus (strain ATCC 33223 / 39E) (Clostridium thermohydrosulfuricum)).